Here is a 365-residue protein sequence, read N- to C-terminus: Phosphatidylcholine:ceramide cholinephosphotransferase 2 (365 aa).

Residues 9 to 50 are disordered; that stretch reads LEGHLESQTNNSTNTYTSPTEAVEEEDKNGKGKPKTLSNGLR. The span at 15 to 28 shows a compositional bias: low complexity; that stretch reads SQTNNSTNTYTSPT. 5 consecutive transmembrane segments (helical) span residues 80-100, 128-148, 159-179, 219-239, and 248-268; these read GIAF…ITVV, FSVS…QWLF, FFFI…VTTL, ILCG…TYLF, and FWWY…CILV. H229 is an active-site residue. Residues H272 and D276 contribute to the active site. The chain crosses the membrane as a helical span at residues 273-290; sequence YTVDVIIAYYITTRLFWW. The Cytoplasmic portion of the chain corresponds to 291–365; that stretch reads YHSMANEKNL…KIGEDNEKST (75 aa). 4 S-palmitoyl cysteine lipidation sites follow: C331, C332, C343, and C348.

The protein belongs to the sphingomyelin synthase family. In terms of processing, palmitoylated on Cys-331, Cys-332, Cys-343 and Cys-348; which plays an important role in plasma membrane localization. As to expression, expression restricted to late round spermatids and elongating spermatids but not detected in late elongate spermatids and Sertoli cells (at protein level).

Its subcellular location is the cell membrane. It localises to the golgi apparatus membrane. It carries out the reaction an N-acylsphing-4-enine + a 1,2-diacyl-sn-glycero-3-phosphocholine = a sphingomyelin + a 1,2-diacyl-sn-glycerol. It catalyses the reaction an N-acylsphinganine + a 1,2-diacyl-sn-glycero-3-phosphocholine = an N-acylsphinganine-1-phosphocholine + a 1,2-diacyl-sn-glycerol. The catalysed reaction is an N-acyl-(4R)-4-hydroxysphinganine + a 1,2-diacyl-sn-glycero-3-phosphocholine = an N-acyl-(4R)-4-hydroxysphinganine-phosphocholine + a 1,2-diacyl-sn-glycerol. The enzyme catalyses an N-acylsphing-4-enine + a 1,2-diacyl-sn-glycero-3-phosphoethanolamine = an N-acylsphing-4-enine 1-phosphoethanolamine + a 1,2-diacyl-sn-glycerol. It carries out the reaction an N-acylsphinganine + a 1,2-diacyl-sn-glycero-3-phosphoethanolamine = an N-acylsphinganine-1-phosphoethanolamine + a 1,2-diacyl-sn-glycerol. It catalyses the reaction an N-acyl-(4R)-4-hydroxysphinganine + a 1,2-diacyl-sn-glycero-3-phosphoethanolamine = an N-acyl-(4R)-4-hydroxysphinganine-1-phosphoethanolamine + a 1,2-diacyl-sn-glycerol. The catalysed reaction is 1,2-dihexadecanoyl-sn-glycero-3-phosphocholine + an N-acylsphing-4-enine = 1,2-dihexadecanoyl-sn-glycerol + a sphingomyelin. The enzyme catalyses 1-(9Z-octadecenoyl)-2-acyl-sn-3-glycerol + a sphingomyelin = a 1-(9Z-octadecenoyl)-2-acyl-sn-glycero-3-phosphocholine + an N-acylsphing-4-enine. It carries out the reaction N-hexadecanoylsphinganine + a 1,2-diacyl-sn-glycero-3-phosphocholine = N-hexadecanoyl-sphinganine-1-phosphocholine + a 1,2-diacyl-sn-glycerol. It catalyses the reaction N-hexadecanoyl-(4R)-hydroxysphinganine + a 1,2-diacyl-sn-glycero-3-phosphocholine = N-hexadecanoyl-(4R)-hydroxysphinganine-phosphocholine + a 1,2-diacyl-sn-glycerol. The catalysed reaction is N-hexadecanoylsphinganine + a 1,2-diacyl-sn-glycero-3-phosphoethanolamine = N-hexadecanoyl-sphinganine-1-phosphoethanolamine + a 1,2-diacyl-sn-glycerol. The enzyme catalyses N-hexadecanoyl-(4R)-hydroxysphinganine + a 1,2-diacyl-sn-glycero-3-phosphoethanolamine = N-hexadecanoyl-(4R)-hydroxysphinganine-1-phosphoethanolamine + a 1,2-diacyl-sn-glycerol. It participates in sphingolipid metabolism. Its function is as follows. Sphingomyelin synthase that primarily contributes to sphingomyelin synthesis and homeostasis at the plasma membrane. Catalyzes the reversible transfer of phosphocholine moiety in sphingomyelin biosynthesis: in the forward reaction transfers phosphocholine head group of phosphatidylcholine (PC) on to ceramide (CER) to form ceramide phosphocholine (sphingomyelin, SM) and diacylglycerol (DAG) as by-product, and in the reverse reaction transfers phosphocholine from SM to DAG to form PC and CER. The direction of the reaction appears to depend on the levels of CER and DAG in the plasma membrane. Does not use free phosphorylcholine or CDP-choline as donors. Can also transfer phosphoethanolamine head group of phosphatidylethanolamine (PE) on to ceramide (CER) to form ceramide phosphoethanolamine (CPE). Regulates receptor-mediated signal transduction via mitogenic DAG and proapoptotic CER, as well as via SM, a structural component of membrane rafts that serve as platforms for signal transduction and protein sorting. To a lesser extent, plays a role in secretory transport via regulation of DAG pool at the Golgi apparatus and its downstream effects on PRKD1. Required for normal bone matrix mineralization. The chain is Phosphatidylcholine:ceramide cholinephosphotransferase 2 (Sgms2) from Rattus norvegicus (Rat).